A 119-amino-acid polypeptide reads, in one-letter code: Large ribosomal subunit protein bL20 (119 aa).

The protein belongs to the bacterial ribosomal protein bL20 family.

In terms of biological role, binds directly to 23S ribosomal RNA and is necessary for the in vitro assembly process of the 50S ribosomal subunit. It is not involved in the protein synthesizing functions of that subunit. In Clostridium novyi (strain NT), this protein is Large ribosomal subunit protein bL20.